The chain runs to 104 residues: Pyrimidine/purine nucleoside phosphorylase (104 aa).

The protein belongs to the nucleoside phosphorylase PpnP family.

It carries out the reaction a purine D-ribonucleoside + phosphate = a purine nucleobase + alpha-D-ribose 1-phosphate. The enzyme catalyses adenosine + phosphate = alpha-D-ribose 1-phosphate + adenine. The catalysed reaction is cytidine + phosphate = cytosine + alpha-D-ribose 1-phosphate. It catalyses the reaction guanosine + phosphate = alpha-D-ribose 1-phosphate + guanine. It carries out the reaction inosine + phosphate = alpha-D-ribose 1-phosphate + hypoxanthine. The enzyme catalyses thymidine + phosphate = 2-deoxy-alpha-D-ribose 1-phosphate + thymine. The catalysed reaction is uridine + phosphate = alpha-D-ribose 1-phosphate + uracil. It catalyses the reaction xanthosine + phosphate = alpha-D-ribose 1-phosphate + xanthine. Catalyzes the phosphorolysis of diverse nucleosides, yielding D-ribose 1-phosphate and the respective free bases. Can use uridine, adenosine, guanosine, cytidine, thymidine, inosine and xanthosine as substrates. Also catalyzes the reverse reactions. This chain is Pyrimidine/purine nucleoside phosphorylase, found in Trichlorobacter lovleyi (strain ATCC BAA-1151 / DSM 17278 / SZ) (Geobacter lovleyi).